Consider the following 260-residue polypeptide: MNENRLAIDILLLCISCGASALAGFSPTASSSLPATNLTDIGFAPPKYLTEAANIPKTRRKRYISQNDMLAILDYHNKVRGKVFPPASNMEYMVWDDTLAKTAEQWASTCIWEHGPRNLLRFLGQNLSVRTGRYRSILQLVKPWHDEVKDYSFPYPRDCNPRCPLKCYGPMCTHYTQMVWATSNKVGCAINTCHNMNVWGSVWKRATYLVCNYSPKGNWIGEAPYKVGVPCSMCPPSYGGSCSNNMCFPAVNSNYLHWFK.

Residues methionine 1–alanine 21 form the signal peptide. Residues leucine 22–arginine 62 constitute a propeptide that is removed on maturation. Residues asparagine 37 and asparagine 126 are each glycosylated (N-linked (GlcNAc...) asparagine). Positions leucine 73–tyrosine 213 constitute an SCP domain.

This sequence belongs to the CRISP family.

Its subcellular location is the secreted. Its function is as follows. Serine protease inhibitor which displays weak inhibitory activity against trypsin. May play a role in facial patterning during embryonic development. The polypeptide is Peptidase inhibitor 15-A (pi15a) (Danio rerio (Zebrafish)).